The following is a 361-amino-acid chain: DNA replication and repair protein RecF (361 aa).

30–37 (GPNGSGKT) is an ATP binding site.

Belongs to the RecF family.

It localises to the cytoplasm. The RecF protein is involved in DNA metabolism; it is required for DNA replication and normal SOS inducibility. RecF binds preferentially to single-stranded, linear DNA. It also seems to bind ATP. The protein is DNA replication and repair protein RecF of Erwinia tasmaniensis (strain DSM 17950 / CFBP 7177 / CIP 109463 / NCPPB 4357 / Et1/99).